The sequence spans 232 residues: Cell cycle response regulator CtrA (232 aa).

The Response regulatory domain occupies R2–V116. 4-aspartylphosphate is present on D51. The ompR/PhoB-type DNA-binding region spans Q124–E223.

In terms of assembly, forms an asymmetric heterotetramer with ChpT (2:2). There are at least two modes of interaction between ChpT and CtrA, only one of which is competent to catalyze His-Asp phosphoryl transfer. Post-translationally, is phosphorylated by ChpT-P on Asp-51.

The protein localises to the cytoplasm. Component of a regulatory phosphorelay system that controls B.abortus cell growth, division, and intracellular survival inside mammalian host cells. This signaling pathway is composed of CckA, ChpT, CtrA and CpdR. CtrA is a response regulator substrate of ChpT. When phosphorylated, directly regulates the expression of ccrM. Is also probably involved in the transcriptional regulation of rpoD, pleC, minC and ftsE genes. The polypeptide is Cell cycle response regulator CtrA (ctrA) (Brucella abortus (strain S19)).